Here is a 351-residue protein sequence, read N- to C-terminus: Nicotinate-nucleotide--dimethylbenzimidazole phosphoribosyltransferase (351 aa).

Residue Glu-317 is the Proton acceptor of the active site.

Belongs to the CobT family.

It carries out the reaction 5,6-dimethylbenzimidazole + nicotinate beta-D-ribonucleotide = alpha-ribazole 5'-phosphate + nicotinate + H(+). It functions in the pathway nucleoside biosynthesis; alpha-ribazole biosynthesis; alpha-ribazole from 5,6-dimethylbenzimidazole: step 1/2. Functionally, catalyzes the synthesis of alpha-ribazole-5'-phosphate from nicotinate mononucleotide (NAMN) and 5,6-dimethylbenzimidazole (DMB). In Pseudomonas putida (strain GB-1), this protein is Nicotinate-nucleotide--dimethylbenzimidazole phosphoribosyltransferase.